The sequence spans 157 residues: Transcription elongation factor GreA (157 aa).

Belongs to the GreA/GreB family.

Necessary for efficient RNA polymerase transcription elongation past template-encoded arresting sites. The arresting sites in DNA have the property of trapping a certain fraction of elongating RNA polymerases that pass through, resulting in locked ternary complexes. Cleavage of the nascent transcript by cleavage factors such as GreA or GreB allows the resumption of elongation from the new 3'terminus. GreA releases sequences of 2 to 3 nucleotides. This Azorhizobium caulinodans (strain ATCC 43989 / DSM 5975 / JCM 20966 / LMG 6465 / NBRC 14845 / NCIMB 13405 / ORS 571) protein is Transcription elongation factor GreA.